A 390-amino-acid polypeptide reads, in one-letter code: tRNA (guanine(26)-N(2))-dimethyltransferase (390 aa).

Residues His-4 to Ile-378 form the Trm1 methyltransferase domain. 5 residues coordinate S-adenosyl-L-methionine: Arg-37, Arg-67, Asp-85, Asp-112, and Ala-113. Residues Cys-245, Cys-248, Cys-265, and Cys-268 each coordinate Zn(2+).

It belongs to the class I-like SAM-binding methyltransferase superfamily. Trm1 family.

It carries out the reaction guanosine(26) in tRNA + 2 S-adenosyl-L-methionine = N(2)-dimethylguanosine(26) in tRNA + 2 S-adenosyl-L-homocysteine + 2 H(+). In terms of biological role, dimethylates a single guanine residue at position 26 of a number of tRNAs using S-adenosyl-L-methionine as donor of the methyl groups. This chain is tRNA (guanine(26)-N(2))-dimethyltransferase, found in Methanosphaera stadtmanae (strain ATCC 43021 / DSM 3091 / JCM 11832 / MCB-3).